The chain runs to 84 residues: Putative antitoxin VapB7 (84 aa).

In terms of biological role, antitoxin component of a possible type II toxin-antitoxin (TA) system. The cognate toxin is VapC7. The polypeptide is Putative antitoxin VapB7 (vapB7) (Mycobacterium tuberculosis (strain ATCC 25618 / H37Rv)).